The sequence spans 369 residues: MRDSPDEVSVDELVNMAVAGGIDEGTALDALQGKLDPYKVMRAAHEARLKIVGEHVTFVVNRNINFTNVCINRCRFCAFRRDPDDPDAYRMTPEEVGERAAEARDAGATEVCLQGGLHPEATFEYYLEMLDEIKSQAPDIHVHGYSPMEVKYCAKLAGEDIEDVLRELKRAGLDSMPGTAAEIFSPEVRKRLCPDKLEADEWEHIIRIAHELGIPTTCTMMYGHIDSPRDWIDHMKRLRGIQEDTGGFTEFVPLSFVHSNAPIYRRGGARPGVSGMTDVLVHAVARLYFGPLIPNIQASWVKLGVKLAQMTLHAGANDLGGTLMEENISREAGATEGEQLEPEEIVEIIREAGFTPVQRTTLYEPVKVY.

In terms of domain architecture, Radical SAM core spans 56–292 (VTFVVNRNIN…AVARLYFGPL (237 aa)). [4Fe-4S] cluster contacts are provided by Cys70, Cys74, and Cys77.

Belongs to the radical SAM superfamily. CofH family. In terms of assembly, consists of two subunits, CofG and CofH. [4Fe-4S] cluster is required as a cofactor.

It carries out the reaction 5-amino-6-(D-ribitylamino)uracil + L-tyrosine + S-adenosyl-L-methionine = 5-amino-5-(4-hydroxybenzyl)-6-(D-ribitylimino)-5,6-dihydrouracil + 2-iminoacetate + 5'-deoxyadenosine + L-methionine + H(+). The protein operates within cofactor biosynthesis; coenzyme F0 biosynthesis. Its function is as follows. Catalyzes the radical-mediated synthesis of 5-amino-5-(4-hydroxybenzyl)-6-(D-ribitylimino)-5,6-dihydrouracil from 5-amino-6-(D-ribitylamino)uracil and L-tyrosine. This is 5-amino-6-(D-ribitylamino)uracil--L-tyrosine 4-hydroxyphenyl transferase from Methanopyrus kandleri (strain AV19 / DSM 6324 / JCM 9639 / NBRC 100938).